The chain runs to 1517 residues: DNA-directed RNA polymerase subunit beta' (1517 aa).

The Zn(2+) site is built by C71, C73, C86, and C89. Residues D482, D484, and D486 each coordinate Mg(2+). 4 residues coordinate Zn(2+): C812, C886, C893, and C896.

This sequence belongs to the RNA polymerase beta' chain family. In terms of assembly, the RNAP catalytic core consists of 2 alpha, 1 beta, 1 beta' and 1 omega subunit. When a sigma factor is associated with the core the holoenzyme is formed, which can initiate transcription. Mg(2+) is required as a cofactor. It depends on Zn(2+) as a cofactor.

The enzyme catalyses RNA(n) + a ribonucleoside 5'-triphosphate = RNA(n+1) + diphosphate. DNA-dependent RNA polymerase catalyzes the transcription of DNA into RNA using the four ribonucleoside triphosphates as substrates. The protein is DNA-directed RNA polymerase subunit beta' of Campylobacter jejuni subsp. jejuni serotype O:2 (strain ATCC 700819 / NCTC 11168).